The primary structure comprises 148 residues: Nucleoside diphosphate kinase 1 (148 aa).

The ATP site is built by Lys-9, Phe-57, Arg-85, Thr-91, Arg-102, and Asn-112. The active-site Pros-phosphohistidine intermediate is His-115.

The protein belongs to the NDK family. Mg(2+) serves as cofactor. The N-terminus is blocked.

It catalyses the reaction a 2'-deoxyribonucleoside 5'-diphosphate + ATP = a 2'-deoxyribonucleoside 5'-triphosphate + ADP. The enzyme catalyses a ribonucleoside 5'-diphosphate + ATP = a ribonucleoside 5'-triphosphate + ADP. In terms of biological role, major role in the synthesis of nucleoside triphosphates other than ATP. The ATP gamma phosphate is transferred to the NDP beta phosphate via a ping-pong mechanism, using a phosphorylated active-site intermediate. This Spinacia oleracea (Spinach) protein is Nucleoside diphosphate kinase 1 (NDPK1).